The following is a 530-amino-acid chain: Light-independent protochlorophyllide reductase subunit B (530 aa).

A [4Fe-4S] cluster-binding site is contributed by aspartate 36. The active-site Proton donor is the aspartate 290. 425-426 (GL) is a substrate binding site. Positions 448 to 483 (LGHLGGHASETKTSSKGINQSPNNHSPAGESIHWTS) are disordered. Over residues 458-473 (TKTSSKGINQSPNNHS) the composition is skewed to polar residues.

This sequence belongs to the ChlB/BchB/BchZ family. In terms of assembly, protochlorophyllide reductase is composed of three subunits; ChlL, ChlN and ChlB. Forms a heterotetramer of two ChlB and two ChlN subunits. Requires [4Fe-4S] cluster as cofactor.

It catalyses the reaction chlorophyllide a + oxidized 2[4Fe-4S]-[ferredoxin] + 2 ADP + 2 phosphate = protochlorophyllide a + reduced 2[4Fe-4S]-[ferredoxin] + 2 ATP + 2 H2O. Its pathway is porphyrin-containing compound metabolism; chlorophyll biosynthesis (light-independent). Component of the dark-operative protochlorophyllide reductase (DPOR) that uses Mg-ATP and reduced ferredoxin to reduce ring D of protochlorophyllide (Pchlide) to form chlorophyllide a (Chlide). This reaction is light-independent. The NB-protein (ChlN-ChlB) is the catalytic component of the complex. The polypeptide is Light-independent protochlorophyllide reductase subunit B (Prochlorococcus marinus (strain SARG / CCMP1375 / SS120)).